The sequence spans 172 residues: MQSQIVCHGCRNILLYPRGAPSVCCAVCHAVSSTAPSPGMDIAHLICGGCRTLLMYTRNATSVRCSCCDTVNLVRPVSSIAHLNCGQCQTVLMYPYGAPSVKCAICNFITNTGMNTMRHLPPNGTSYTAPSTSAPTTQSQNVTVVVENPMTVDAKGKLVSNVVVGVTTGGKK.

Putative zinc finger regions lie at residues 4 to 34 (QIVCHGCRNILLYPRGAPSVCCAVCHAVSST), 44 to 74 (HLICGGCRTLLMYTRNATSVRCSCCDTVNLV), and 82 to 112 (HLNCGQCQTVLMYPYGAPSVKCAICNFITNT).

Its subcellular location is the nucleus. Putative zinc finger that may be involved in programmed cell death and defense response. The chain is Protein LOL2 (LOL2) from Oryza sativa subsp. japonica (Rice).